The chain runs to 983 residues: UPF0182 protein CMM_1204 (983 aa).

Helical transmembrane passes span 16–36 (LAIT…FAGF), 56–76 (WGAG…PVFV), 108–128 (LAMF…ASSG), 161–181 (FYHA…LGVL), 205–225 (IQIA…IWLD), 255–275 (AILA…AVIG), and 281–301 (IIGT…YPAI). The span at 699–714 (QDLWTTPNDPTATTEA) shows a compositional bias: polar residues. Disordered stretches follow at residues 699–718 (QDLW…GTPA) and 884–936 (DSGA…AQDV). Residues 902-918 (GGTGDGATDGATDGGTG) are compositionally biased toward gly residues. The segment covering 919 to 933 (STPTPAPTTSPSAPA) has biased composition (low complexity).

It belongs to the UPF0182 family.

Its subcellular location is the cell membrane. The sequence is that of UPF0182 protein CMM_1204 from Clavibacter michiganensis subsp. michiganensis (strain NCPPB 382).